Here is a 649-residue protein sequence, read N- to C-terminus: tRNA-guanine(15) transglycosylase (649 aa).

The active-site Nucleophile is Asp88. The substrate site is built by Asp123 and Ala194. Residues Cys280, Cys282, and Cys285 each coordinate Zn(2+). One can recognise a PUA domain in the interval Lys573–Lys648.

This sequence belongs to the archaeosine tRNA-ribosyltransferase family. The cofactor is Zn(2+).

It carries out the reaction guanosine(15) in tRNA + 7-cyano-7-deazaguanine = 7-cyano-7-carbaguanosine(15) in tRNA + guanine. Its pathway is tRNA modification; archaeosine-tRNA biosynthesis. Functionally, exchanges the guanine residue with 7-cyano-7-deazaguanine (preQ0) at position 15 in the dihydrouridine loop (D-loop) of archaeal tRNAs. In Methanococcus maripaludis (strain C7 / ATCC BAA-1331), this protein is tRNA-guanine(15) transglycosylase.